We begin with the raw amino-acid sequence, 432 residues long: Golgin subfamily A member 6-like protein 9 (432 aa).

The segment covering 1–11 (MWPQPRLPPHP) has biased composition (pro residues). 2 disordered regions span residues 1-77 (MWPQ…YGEG) and 349-411 (KELE…AGGA). Positions 51 to 62 (NGSSPDTFTSGG) are enriched in polar residues. Residues 157 to 354 (SKMEQLQDET…EQQVKELEKS (198 aa)) adopt a coiled-coil conformation. Basic and acidic residues predominate over residues 349–362 (KELEKSGGAEEPRG). Over residues 366–381 (AAAARPVAGAPVPQGA) the composition is skewed to low complexity.

The protein belongs to the GOLGA6 family.

The polypeptide is Golgin subfamily A member 6-like protein 9 (Homo sapiens (Human)).